The following is a 59-amino-acid chain: UPF0434 protein HDEF_0234 (59 aa).

It belongs to the UPF0434 family.

The chain is UPF0434 protein HDEF_0234 from Hamiltonella defensa subsp. Acyrthosiphon pisum (strain 5AT).